Consider the following 393-residue polypeptide: Elongation factor Tu (393 aa).

The region spanning 10–203 (KPHVNIGTIG…AVDSYIPEPV (194 aa)) is the tr-type G domain. The G1 stretch occupies residues 19–26 (GHVDHGKT). 19 to 26 (GHVDHGKT) contacts GTP. Position 26 (Thr-26) interacts with Mg(2+). The segment at 60 to 64 (GITIS) is G2. Residues 81-84 (DCPG) form a G3 region. Residues 81–85 (DCPGH) and 136–139 (NKVD) each bind GTP. The G4 stretch occupies residues 136-139 (NKVD). The interval 173 to 175 (SAL) is G5.

This sequence belongs to the TRAFAC class translation factor GTPase superfamily. Classic translation factor GTPase family. EF-Tu/EF-1A subfamily. As to quaternary structure, monomer.

The protein resides in the cytoplasm. The catalysed reaction is GTP + H2O = GDP + phosphate + H(+). In terms of biological role, GTP hydrolase that promotes the GTP-dependent binding of aminoacyl-tRNA to the A-site of ribosomes during protein biosynthesis. The sequence is that of Elongation factor Tu from Prosthecochloris aestuarii (strain DSM 271 / SK 413).